Here is a 1159-residue protein sequence, read N- to C-terminus: MAEGIGTFGTLSRDVLEERLMEARRTYRLNMGYAGLKQLPPGFVELVKKYNPHITELELSSNDLTDLPDELEEFRYLRILRLKYNQLKRIPAVVYRLPQLMVFDASGNRIQKVDDAIGHLSLLKELDVSGNEITTLPESLSTLPKLEVLQVENNRLELLPESLGELPGVIKMDLSTNNLRYLPASMGQLKKVQRIDVGNNLLTKVPPSMGHLKTLKEFNLRYNHLDDRYKAKVEEGLSKFLAFLREEEERERLEEIERLKPIGTPVGAYLEYRCKAEVGQVVKTDMGETTVDNRCWIRTGHTLTQVGSMLLIFGGQLQKDGSTTNDLFWMTMDRMEWHNQPCKGEKPPPRYNHAACYDEENNRLVVFGGRTAERKRLNDIYFLDLDSWTWFKPSTEGTAPTPREQAVATFWAGSMVLFGGHAIGGRTNDLFLLDLGAWQWSQPAFSGTAPSPRQACALCIGHGNLLFVHGGRNNFVLEDLHVMDFVSKNWTEIPCEGRVPPPRHSHRITVHRDQLYLLGGLDELGAQSVAMYRVALPAGQQDTYATSKPKWVEWDSELPYNKNRTATLWNGTISIYQLGSNTLGRVNDDDAEKGLDELRPKNAKRMRVQHTINTAGKMPRSFTQHSAHEARVLQYVQDFQRIFEELYPYRRPLYLTPRNECGVPKFVCTSLRPSQLVYTELYDLDGASQFVADFLSYEPLEDPLHPPDTLPSPMSALEWRAGDSFDMATVLASMLLGVGYNAFVVLGYAPGPVVQNDQRNTDLAATRTGAGAEEEEESGPCKFVHAWVMVLPGKREVTEAMFIEPSAGRKDVSYDLSDPTKWEPVFEDRGMRSRADGNADESETEGGGGLDDGEGVEAEVVPDIPPSWVPKLTIPRDAFDMRCPRHEIFARFGDCSRWDGMVERLVLYADEERTVVTEIRETFTRRRDKLRERRVYPQKDTTIEHFNRGSVFALKDILTVKNDRRGRKVIQYYTGRDDRLIYISATYAVDPLAPRPQPSALLEEYSSLLVAEKDCLQWVRDGEWEISEIIRTRTNQEQNITLETPYYDIVRIKAEESEEVREKALKALKDRLIERANIIQARLDEESAALAKRQQTFHRDRDQMSAAEEEDYERQTEESMFRIHILERRLRRHEEQALHKYYELDAKLRADGRLAALLN.

9 LRR repeats span residues 21-46 (MEAR…FVEL), 51-74 (NPHI…LEEF), 75-97 (RYLR…VYRL), 99-120 (QLMV…IGHL), 121-143 (SLLK…LSTL), 144-166 (PKLE…LGEL), 168-189 (GVIK…MGQL), 190-212 (KKVQ…MGHL), and 214-235 (TLKE…KVEE). 5 Kelch repeats span residues 309 to 360 (MLLI…YDEE), 363 to 413 (RLVV…FWAG), 415 to 463 (MVLF…IGHG), 465 to 513 (LLFV…VHRD), and 515 to 571 (LYLL…LWNG). Residues 827–837 (EDRGMRSRADG) show a composition bias toward basic and acidic residues. Residues 827-857 (EDRGMRSRADGNADESETEGGGGLDDGEGVE) form a disordered region. Positions 1050–1137 (VRIKAEESEE…RRLRRHEEQA (88 aa)) form a coiled coil.

This sequence belongs to the DRC7 family. As to quaternary structure, component of the nexin-dynein regulatory complex (N-DRC). Interacts with DRC5. Phosphorylated.

The protein localises to the cell projection. Its subcellular location is the cilium. The protein resides in the flagellum. It localises to the cytoplasm. It is found in the cytoskeleton. The protein localises to the cilium axoneme. Its subcellular location is the flagellum axoneme. Functionally, component of the nexin-dynein regulatory complex (N-DRC) a key regulator of ciliary/flagellar motility which maintains the alignment and integrity of the distal axoneme and regulates microtubule sliding in motile axonemes. Involved in the regulation of flagellar motility. The protein is Dynein regulatory complex subunit 7 (DRC7) of Chlamydomonas reinhardtii (Chlamydomonas smithii).